A 184-amino-acid polypeptide reads, in one-letter code: Spiro-conjugate synthase (184 aa).

Cys57 and Cys184 are joined by a disulfide. Gln115 contributes to the (1S,3R,6R,8R,9R,11R,14S,15S,19R,20R)-8-ethyl-9,15-dihydroxy-3,4,6,20-tetramethyl-21,23-dioxo-24-azapentacyclo[20.2.1.0(1,6).0(11,20).0(14,19)]pentacosa-4,12,22(25)-trien-25-olate binding site.

Homodimer.

The catalysed reaction is 4-[(1R,2R,4aS,5S,8aR)-2-[(2R,3R,5E,7E)-3-ethyl-2-hydroxy-5,7-dimethylnona-5,7-dien-1-yl]-5-hydroxy-1-methyl-1,2,4a,5,6,7,8,8a-octahydronaphthalene-1-carbonyl]-2-methylidene-5-oxo-2,5-dihydro-1H-pyrrol-3-olate = (1S,3R,6R,8R,9R,11R,14S,15S,19R,20R)-8-ethyl-9,15-dihydroxy-3,4,6,20-tetramethyl-21,23-dioxo-24-azapentacyclo[20.2.1.0(1,6).0(11,20).0(14,19)]pentacosa-4,12,22(25)-trien-25-olate. It functions in the pathway antibiotic biosynthesis. Its function is as follows. Involved in the biosynthesis of the spirotetramate antibiotics pyrroindomycins. Catalyzes the intramolecular cyclization forming the spiro-conjugate moiety in pyrroindomycins, via an exo-selective [4+2] cycloaddition reaction. This is Spiro-conjugate synthase from Streptomyces rugosporus.